The sequence spans 383 residues: Chorismate synthase (383 aa).

NADP(+) contacts are provided by arginine 39 and arginine 45. FMN contacts are provided by residues 127-129 (RAS), 249-250 (QS), glycine 294, 309-313 (KPIPT), and arginine 335.

This sequence belongs to the chorismate synthase family. In terms of assembly, homotetramer. FMNH2 is required as a cofactor.

The enzyme catalyses 5-O-(1-carboxyvinyl)-3-phosphoshikimate = chorismate + phosphate. It participates in metabolic intermediate biosynthesis; chorismate biosynthesis; chorismate from D-erythrose 4-phosphate and phosphoenolpyruvate: step 7/7. Functionally, catalyzes the anti-1,4-elimination of the C-3 phosphate and the C-6 proR hydrogen from 5-enolpyruvylshikimate-3-phosphate (EPSP) to yield chorismate, which is the branch point compound that serves as the starting substrate for the three terminal pathways of aromatic amino acid biosynthesis. This reaction introduces a second double bond into the aromatic ring system. This is Chorismate synthase from Caldicellulosiruptor bescii (strain ATCC BAA-1888 / DSM 6725 / KCTC 15123 / Z-1320) (Anaerocellum thermophilum).